A 474-amino-acid chain; its full sequence is Protein SAAL1 (474 aa).

The segment covering 1 to 10 (MDRNPSPPPP) has biased composition (pro residues). Positions 1-21 (MDRNPSPPPPGRDKEEEEEVA) are disordered. Ser6 is modified (phosphoserine). Thr387 is subject to Phosphothreonine.

This sequence belongs to the SAAL1 family. In terms of tissue distribution, highly expressed in testis and ovary, and to a lesser extent in the lung, spleen and the heart (at protein level).

It is found in the nucleus. In terms of biological role, plays a role in promoting the proliferation of synovial fibroblasts in response to pro-inflammatory stimuli. This Homo sapiens (Human) protein is Protein SAAL1 (SAAL1).